Here is a 358-residue protein sequence, read N- to C-terminus: Aminodeoxyfutalosine deaminase (358 aa).

The Zn(2+) site is built by histidine 32 and histidine 34. Substrate contacts are provided by arginine 87, aspartate 154, and glycine 188. Histidine 215 is a Zn(2+) binding site. The active-site Proton donor is the glutamate 218. Aspartate 296 lines the Zn(2+) pocket.

Belongs to the metallo-dependent hydrolases superfamily. Adenosine and AMP deaminases family. Zn(2+) serves as cofactor.

The catalysed reaction is 6-amino-6-deoxyfutalosine + H2O + H(+) = futalosine + NH4(+). Its pathway is quinol/quinone metabolism; menaquinone biosynthesis. Functionally, catalyzes the deamination of aminodeoxyfutalosine (AFL) into futalosine (FL), a step in the biosynthesis of menaquinone (MK, vitamin K2). To a lesser extent, can also deaminate adenosine, 5'-methylthioadenosine, 5'-deoxyadenosine, and 2'-deoxyadenosine. In Streptomyces avermitilis (strain ATCC 31267 / DSM 46492 / JCM 5070 / NBRC 14893 / NCIMB 12804 / NRRL 8165 / MA-4680), this protein is Aminodeoxyfutalosine deaminase (add2).